The following is a 556-amino-acid chain: Sensory neuron membrane protein 2 (556 aa).

At 1 to 6 (MIHWSL) the chain is on the cytoplasmic side. The chain crosses the membrane as a helical span at residues 7–27 (IVSALGVCVAVLGGYCGWILF). At 28-522 (PNMVHKKVEQ…KLINTLKTLN (495 aa)) the chain is on the extracellular side. 4 N-linked (GlcNAc...) asparagine glycosylation sites follow: asparagine 66, asparagine 274, asparagine 310, and asparagine 324. Disulfide bonds link cysteine 320/cysteine 388 and cysteine 349/cysteine 415. A helical membrane pass occupies residues 523 to 543 (IVHWATLCGGIGVAVACLIYY). Over 544-556 (IYQRGRVVEPPVK) the chain is Cytoplasmic.

The protein belongs to the CD36 family. As to expression, detected in the head and to a lesser extent in legs and wings.

The protein localises to the cell membrane. Plays an olfactory role that is not restricted to pheromone sensitivity. This Drosophila melanogaster (Fruit fly) protein is Sensory neuron membrane protein 2.